An 83-amino-acid chain; its full sequence is Cytochrome b559 subunit alpha (83 aa).

Residues 21-35 (VIHSITIPSLFIAGW) form a helical membrane-spanning segment. Heme is bound at residue His23.

It belongs to the PsbE/PsbF family. As to quaternary structure, heterodimer of an alpha subunit and a beta subunit. PSII is composed of 1 copy each of membrane proteins PsbA, PsbB, PsbC, PsbD, PsbE, PsbF, PsbH, PsbI, PsbJ, PsbK, PsbL, PsbM, PsbT, PsbX, PsbY, PsbZ, Psb30/Ycf12, at least 3 peripheral proteins of the oxygen-evolving complex and a large number of cofactors. It forms dimeric complexes. Heme b is required as a cofactor.

It is found in the plastid. It localises to the chloroplast thylakoid membrane. Functionally, this b-type cytochrome is tightly associated with the reaction center of photosystem II (PSII). PSII is a light-driven water:plastoquinone oxidoreductase that uses light energy to abstract electrons from H(2)O, generating O(2) and a proton gradient subsequently used for ATP formation. It consists of a core antenna complex that captures photons, and an electron transfer chain that converts photonic excitation into a charge separation. The polypeptide is Cytochrome b559 subunit alpha (Pinus koraiensis (Korean pine)).